Reading from the N-terminus, the 232-residue chain is Thiamine import ATP-binding protein ThiQ (232 aa).

The ABC transporter domain occupies 2-230; the sequence is LKLTDITWLY…KGSASAIWGI (229 aa). Residue 32-39 coordinates ATP; the sequence is GPSGAGKS.

It belongs to the ABC transporter superfamily. Thiamine importer (TC 3.A.1.19.1) family. The complex is composed of two ATP-binding proteins (ThiQ), two transmembrane proteins (ThiP) and a solute-binding protein (ThiB).

It localises to the cell inner membrane. The enzyme catalyses thiamine(out) + ATP + H2O = thiamine(in) + ADP + phosphate + H(+). Part of the ABC transporter complex ThiBPQ involved in thiamine import. Responsible for energy coupling to the transport system. This is Thiamine import ATP-binding protein ThiQ from Shigella flexneri.